A 712-amino-acid chain; its full sequence is Probable serine/threonine-protein kinase fhkE (712 aa).

The region spanning 46-100 is the FHA domain; that stretch reads ITFGRLKDSTVHYNDKSISGSHCKITRESNDDDGVVIAFIYDNSTNGTFIDNIKV. Residues 145-411 form the Protein kinase domain; that stretch reads YFIGEMLGQG…CNNIIQHPWF (267 aa). Residues 151–159 and Lys174 each bind ATP; that span reads LGQGNFATV. The active-site Proton acceptor is Asp270. Residues 414 to 442 are a coiled coil; it reads NVKLSTLLEEDERLRKKAEAEVEANNNNT. The tract at residues 431-695 is disordered; that stretch reads AEAEVEANNN…KCQYDPNCYR (265 aa). Low complexity-rich tracts occupy residues 436 to 446, 459 to 481, 514 to 571, 595 to 605, and 616 to 639; these read EANNNNTNKSN, GNCS…IKSN, NNDN…SNDT, NLQNHLNNNKI, and NNNN…NNNN. Over residues 669–678 the composition is skewed to polar residues; it reads PQNSSNNNSG.

Belongs to the protein kinase superfamily. CAMK Ser/Thr protein kinase family. CHK2 subfamily.

It catalyses the reaction L-seryl-[protein] + ATP = O-phospho-L-seryl-[protein] + ADP + H(+). The enzyme catalyses L-threonyl-[protein] + ATP = O-phospho-L-threonyl-[protein] + ADP + H(+). This chain is Probable serine/threonine-protein kinase fhkE (fhkE), found in Dictyostelium discoideum (Social amoeba).